Here is a 201-residue protein sequence, read N- to C-terminus: MSISPAIDQLVENLKRLPGVGQKSAQRMAFHLLERDRGGASRLAESLQSAVEKVGHCECCRTLTEEPLCRICSNPMRRENGVLCIVETPADVLAIEQTSQFQGRYFVLMGHLSPLDGIGPADIGLDELERQLQSEPVEEIVLATNPTVEGDATAHYIADIAAQLNINTTRIAHGVPVGGELGYVDQTTLGHAFSGRKQFSR.

The C4-type zinc-finger motif lies at 57–72 (CECCRTLTEEPLCRIC). A Toprim domain is found at 81-176 (GVLCIVETPA…NTTRIAHGVP (96 aa)).

Belongs to the RecR family.

Its function is as follows. May play a role in DNA repair. It seems to be involved in an RecBC-independent recombinational process of DNA repair. It may act with RecF and RecO. This is Recombination protein RecR from Idiomarina loihiensis (strain ATCC BAA-735 / DSM 15497 / L2-TR).